Consider the following 340-residue polypeptide: Ferrochelatase (340 aa).

Fe cation is bound by residues His189 and Glu292.

It belongs to the ferrochelatase family.

The protein resides in the cytoplasm. The enzyme catalyses heme b + 2 H(+) = protoporphyrin IX + Fe(2+). It participates in porphyrin-containing compound metabolism; protoheme biosynthesis; protoheme from protoporphyrin-IX: step 1/1. Functionally, catalyzes the ferrous insertion into protoporphyrin IX. The sequence is that of Ferrochelatase from Pseudomonas aeruginosa (strain LESB58).